The sequence spans 119 residues: NLVQFSNMIQCANHGSRPSLAYADYGCYCSAGGSGTPVDELDRCCKTHDDCYARATKSYSCTPYWTLYSWQCIEKTPTCDSKTGCQRFVCDCDATAAKCFAKAPYNKENYNIDPKKRCQ.

Cystine bridges form between Cys-11/Cys-72, Cys-27/Cys-118, Cys-29/Cys-45, Cys-44/Cys-99, Cys-51/Cys-92, Cys-61/Cys-85, and Cys-79/Cys-90. The important for membrane-damaging activities in eukaryotes and bacteria; heparin-binding stretch occupies residues 107 to 117 (KENYNIDPKKR).

It belongs to the phospholipase A2 family. Group I subfamily. D49 sub-subfamily. In terms of tissue distribution, expressed by the venom gland.

Its subcellular location is the secreted. In Notechis scutatus scutatus (Mainland tiger snake), this protein is Basic phospholipase A2 homolog 1.